A 224-amino-acid chain; its full sequence is UPF0758 protein LCA_0852 (224 aa).

The MPN domain occupies 100-222; the sequence is VVASSQMVGQ…YLSLREEGYL (123 aa). The Zn(2+) site is built by His-171, His-173, and Asp-184. The short motif at 171–184 is the JAMM motif element; that stretch reads HNHPSGQLAPSTQD.

It belongs to the UPF0758 family.

This chain is UPF0758 protein LCA_0852, found in Latilactobacillus sakei subsp. sakei (strain 23K) (Lactobacillus sakei subsp. sakei).